A 604-amino-acid polypeptide reads, in one-letter code: ATP-dependent RNA helicase DBP1 (604 aa).

A disordered region spans residues 1 to 79 (MSDGSGRYVP…RASGSGGFGG (79 aa)). Positions 32-45 (SRYSGNGFFSSPNR) are enriched in polar residues. The short motif at 138–166 (TEFKSPPLDELLLENVELANFSKPTPVQK) is the Q motif element. One can recognise a Helicase ATP-binding domain in the interval 169 to 358 (IPIVTKNRDL…RDFLKDYIFL (190 aa)). Residue 182-189 (AQTGSGKT) coordinates ATP. The DEAD box motif lies at 302–305 (DEAD). In terms of domain architecture, Helicase C-terminal spans 386 to 529 (LLDILINEID…EVPQFLVNMV (144 aa)). Residues 535–591 (FGRGGRNSRTGSNRGRGSNTRDYRHSNKDDWGSLGSSRRGFRSNDNRGFGNNWGSSS) are disordered. Low complexity predominate over residues 541–552 (NSRTGSNRGRGS). The segment covering 553 to 565 (NTRDYRHSNKDDW) has biased composition (basic and acidic residues).

Belongs to the DEAD box helicase family. DDX3/DED1 subfamily.

It is found in the cytoplasm. It catalyses the reaction ATP + H2O = ADP + phosphate + H(+). Functionally, ATP-binding RNA helicase involved in translation initiation. Remodels RNA in response to ADP and ATP concentrations by facilitating disruption, but also formation of RNA duplexes. Redundant to DED1, may be required in conditions in which DED1 expression is decreased. The sequence is that of ATP-dependent RNA helicase DBP1 (DBP1) from Candida glabrata (strain ATCC 2001 / BCRC 20586 / JCM 3761 / NBRC 0622 / NRRL Y-65 / CBS 138) (Yeast).